A 381-amino-acid chain; its full sequence is Phospholipid scramblase family protein C343.06c (381 aa).

Residues 336-369 (QEILKNDQETTPSTNDSSSETKSPFLSDADLDQQ) are disordered. Over residues 344–359 (ETTPSTNDSSSETKSP) the composition is skewed to polar residues.

Belongs to the phospholipid scramblase family.

Its subcellular location is the mitochondrion. This Schizosaccharomyces pombe (strain 972 / ATCC 24843) (Fission yeast) protein is Phospholipid scramblase family protein C343.06c.